The following is a 287-amino-acid chain: Nematocyst expressed protein 6 (287 aa).

An N-terminal signal peptide occupies residues Met-1–Gly-20. Positions Arg-53–Asn-249 constitute a Peptidase M12A domain. 2 disulfides stabilise this stretch: Cys-95/Cys-248 and Cys-116/Cys-139. His-146 is a binding site for Zn(2+). Glu-147 is a catalytic residue. Residues His-150 and His-156 each coordinate Zn(2+). Residues Asn-249–Glu-287 form a disordered region. Positions Gly-268–Glu-287 are enriched in basic and acidic residues.

The cofactor is Zn(2+). As to expression, nematocyte and pharyngeal gland.

The protein resides in the secreted. Its subcellular location is the nematocyst. In terms of biological role, metalloprotease. In Nematostella vectensis (Starlet sea anemone), this protein is Nematocyst expressed protein 6.